A 451-amino-acid polypeptide reads, in one-letter code: Ubiquitin hydrolase B (451 aa).

Residues 19 to 450 enclose the USP domain; sequence RGLINTSNTC…EAYLLLYQLV (432 aa). The span at 83–115 shows a compositional bias: low complexity; sequence NNSNSTTTTSSSSTTATTTSTSNNNKSQTPTSP. Positions 83–154 are disordered; the sequence is NNSNSTTTTS…PPINPKHFND (72 aa). A compositionally biased stretch (polar residues) spans 116-135; the sequence is IQQHHQSQTNGLSNQPSVAT. H399 serves as the catalytic Nucleophile. The active-site Proton acceptor is the H408.

It belongs to the peptidase C19 family. Interacts with mkkA (via F-box/WD40 domains).

The catalysed reaction is Thiol-dependent hydrolysis of ester, thioester, amide, peptide and isopeptide bonds formed by the C-terminal Gly of ubiquitin (a 76-residue protein attached to proteins as an intracellular targeting signal).. In terms of biological role, required for proper prespore cell patterning. Plays a role in stabilizing mkkA by preventing it from being targeted for degradation. ubcB and ubpB differentially control ubiquitination/deubiquitination and degradation of mkkA in a cell-type-specific and temporally regulated manner. This chain is Ubiquitin hydrolase B (ubpB), found in Dictyostelium discoideum (Social amoeba).